A 202-amino-acid polypeptide reads, in one-letter code: Large ribosomal subunit protein bL25 (202 aa).

It belongs to the bacterial ribosomal protein bL25 family. CTC subfamily. As to quaternary structure, part of the 50S ribosomal subunit; part of the 5S rRNA/L5/L18/L25 subcomplex. Contacts the 5S rRNA. Binds to the 5S rRNA independently of L5 and L18.

Functionally, this is one of the proteins that binds to the 5S RNA in the ribosome where it forms part of the central protuberance. The polypeptide is Large ribosomal subunit protein bL25 (Paramagnetospirillum magneticum (strain ATCC 700264 / AMB-1) (Magnetospirillum magneticum)).